A 311-amino-acid polypeptide reads, in one-letter code: Tricarboxylate transport protein, mitochondrial (311 aa).

Positions 1–13 (MPAPRAPRALAAA) are cleaved as a propeptide — removed in mature form. Solcar repeat units lie at residues 23–111 (THPG…LSNH), 122–208 (TRGL…LRNW), and 218–303 (MNPL…VVKL). Helical transmembrane passes span 29 to 46 (ILAG…TFPT), 86 to 105 (GLSS…FGMF), and 129 to 143 (LGAG…VCPM). Ser-156 carries the post-translational modification Phosphoserine. Helical transmembrane passes span 183–202 (GLTA…FFVM), 224–241 (GVFG…NTPL), and 278–297 (GTVP…FVIY).

This sequence belongs to the mitochondrial carrier (TC 2.A.29) family. Post-translationally, possesses a short cleavable presequence, which, however, is found to be dispensable both for targeting to mitochondria and insertion into the inner membrane. However, the presequence is required to keep SLC25A1 in a soluble state and thus in an import-competent state. Mature SLC25A1 lacking the presequence is prone to aggregation.

It localises to the mitochondrion inner membrane. The catalysed reaction is (S)-malate(in) + citrate(out) = (S)-malate(out) + citrate(in). The enzyme catalyses D-threo-isocitrate(in) + citrate(out) = D-threo-isocitrate(out) + citrate(in). It catalyses the reaction citrate(out) + succinate(in) = citrate(in) + succinate(out). It carries out the reaction cis-aconitate(in) + citrate(out) = cis-aconitate(out) + citrate(in). The catalysed reaction is trans-aconitate(in) + citrate(out) = trans-aconitate(out) + citrate(in). The enzyme catalyses phosphoenolpyruvate(in) + citrate(out) = phosphoenolpyruvate(out) + citrate(in). It catalyses the reaction maleate(in) + citrate(out) = maleate(out) + citrate(in). Functionally, mitochondrial electroneutral antiporter that exports citrate from the mitochondria into the cytosol in exchange for malate. Also able to mediate the exchange of citrate for isocitrate, phosphoenolpyruvate, cis-aconitate and to a lesser extent trans-aconitate, maleate and succinate. In the cytoplasm, citrate plays important roles in fatty acid and sterol synthesis, regulation of glycolysis, protein acetylation, and other physiopathological processes. The protein is Tricarboxylate transport protein, mitochondrial (SLC25A1) of Homo sapiens (Human).